The sequence spans 342 residues: Tetraacyldisaccharide 4'-kinase (342 aa).

68 to 75 (TVGGTGKT) lines the ATP pocket.

It belongs to the LpxK family.

The enzyme catalyses a lipid A disaccharide + ATP = a lipid IVA + ADP + H(+). It participates in glycolipid biosynthesis; lipid IV(A) biosynthesis; lipid IV(A) from (3R)-3-hydroxytetradecanoyl-[acyl-carrier-protein] and UDP-N-acetyl-alpha-D-glucosamine: step 6/6. In terms of biological role, transfers the gamma-phosphate of ATP to the 4'-position of a tetraacyldisaccharide 1-phosphate intermediate (termed DS-1-P) to form tetraacyldisaccharide 1,4'-bis-phosphate (lipid IVA). The polypeptide is Tetraacyldisaccharide 4'-kinase (Burkholderia pseudomallei (strain K96243)).